A 124-amino-acid polypeptide reads, in one-letter code: Sulfiredoxin (124 aa).

This sequence belongs to the sulfiredoxin family. As to quaternary structure, interacts with tpx1 in response to oxidative stress.

It localises to the cytoplasm. Its subcellular location is the nucleus. It catalyses the reaction S-hydroxy-S-oxy-L-cysteinyl-[peroxiredoxin] + [protein]-dithiol + ATP = S-hydroxy-L-cysteinyl-[peroxiredoxin] + [protein]-disulfide + ADP + phosphate. Functionally, contributes to oxidative stress resistance by reducing cysteine-sulfinic acid formed under exposure to oxidants in a peroxiredoxin. May catalyze the reduction in a multi-step process by acting both as a specific phosphotransferase and a thioltransferase. In Schizosaccharomyces pombe (strain 972 / ATCC 24843) (Fission yeast), this protein is Sulfiredoxin (srx1).